Here is a 309-residue protein sequence, read N- to C-terminus: Wnt inhibitor of Dorsal protein (309 aa).

A signal peptide spans 1–16; sequence MIFAITFFMGITSTLA. 10 cysteine pairs are disulfide-bonded: C51–C62, C102–C110, C112–C121, C162–C179, C164–C174, C232–C269, C248–C262, C266–C308, C284–C299, and C286–C296.

Belongs to the Wnt family.

It is found in the secreted. It localises to the extracellular space. Its subcellular location is the extracellular matrix. Functionally, binds as a ligand to a family of frizzled seven-transmembrane receptors and acts through a cascade of genes on the nucleus. The protein is Wnt inhibitor of Dorsal protein (wntD) of Drosophila melanogaster (Fruit fly).